The following is a 277-amino-acid chain: MKRLYGVIGNPIGHSLSPVMHNDAFEHLKMDAHYHAFLVKEEVLGEAVRGLKALGISGFNVTTPHKVAIMDYLDEIDPLAKQIGAVNTVVHKDGKLIGYNTDGIGFVRALQSISSEPLQEKRILLLGAGGASRAIYFSLADAGVKEIDVANRTVDKAKELIAACTATVHSVALSLEKATKEQGNYDIIIQTTTIGMHPRVEHTPLQISSLKKGTIVSDIIYNPFETKILCEAKEQGAIIQNGIDMFVYQGALAFEMWTGCVPNIERMKQLVIRKLGG.

Residues 15 to 17 (SLS) and Thr62 each bind shikimate. Lys66 (proton acceptor) is an active-site residue. Positions 87 and 102 each coordinate shikimate. NADP(+) contacts are provided by residues 127–131 (GAGGA), 151–156 (NRTVDK), and Ile219. Tyr221 serves as a coordination point for shikimate. Gly242 contributes to the NADP(+) binding site.

This sequence belongs to the shikimate dehydrogenase family. In terms of assembly, homodimer.

It carries out the reaction shikimate + NADP(+) = 3-dehydroshikimate + NADPH + H(+). The protein operates within metabolic intermediate biosynthesis; chorismate biosynthesis; chorismate from D-erythrose 4-phosphate and phosphoenolpyruvate: step 4/7. Its function is as follows. Involved in the biosynthesis of the chorismate, which leads to the biosynthesis of aromatic amino acids. Catalyzes the reversible NADPH linked reduction of 3-dehydroshikimate (DHSA) to yield shikimate (SA). The chain is Shikimate dehydrogenase (NADP(+)) from Bacillus anthracis (strain CDC 684 / NRRL 3495).